Consider the following 462-residue polypeptide: Chromosomal replication initiator protein DnaA (462 aa).

The domain I, interacts with DnaA modulators stretch occupies residues 1–84; sequence MAVSLWQQCI…RFDIGSRPSA (84 aa). The interval 84–125 is domain II; the sequence is ARTVQPAPAAPRPTTGHTQTKARVGTAFNIQAEPMANANHRS. The interval 126–342 is domain III, AAA+ region; it reads NINPTYQFDN…GALNRVIANA (217 aa). Gly-170, Gly-172, Lys-173, and Thr-174 together coordinate ATP. Residues 343–462 are domain IV, binds dsDNA; sequence NFTGRPITID…YANLIRTLSS (120 aa).

It belongs to the DnaA family. In terms of assembly, oligomerizes as a right-handed, spiral filament on DNA at oriC.

The protein resides in the cytoplasm. In terms of biological role, plays an essential role in the initiation and regulation of chromosomal replication. ATP-DnaA binds to the origin of replication (oriC) to initiate formation of the DNA replication initiation complex once per cell cycle. Binds the DnaA box (a 9 base pair repeat at the origin) and separates the double-stranded (ds)DNA. Forms a right-handed helical filament on oriC DNA; dsDNA binds to the exterior of the filament while single-stranded (ss)DNA is stabiized in the filament's interior. The ATP-DnaA-oriC complex binds and stabilizes one strand of the AT-rich DNA unwinding element (DUE), permitting loading of DNA polymerase. After initiation quickly degrades to an ADP-DnaA complex that is not apt for DNA replication. Binds acidic phospholipids. The chain is Chromosomal replication initiator protein DnaA from Shewanella denitrificans (strain OS217 / ATCC BAA-1090 / DSM 15013).